Here is a 283-residue protein sequence, read N- to C-terminus: 4-diphosphocytidyl-2-C-methyl-D-erythritol kinase (283 aa).

Lys-10 is an active-site residue. 99–109 (PMGGGLGGGSS) serves as a coordination point for ATP. Asp-141 is an active-site residue.

Belongs to the GHMP kinase family. IspE subfamily. In terms of assembly, homodimer.

It catalyses the reaction 4-CDP-2-C-methyl-D-erythritol + ATP = 4-CDP-2-C-methyl-D-erythritol 2-phosphate + ADP + H(+). It functions in the pathway isoprenoid biosynthesis; isopentenyl diphosphate biosynthesis via DXP pathway; isopentenyl diphosphate from 1-deoxy-D-xylulose 5-phosphate: step 3/6. Its function is as follows. Catalyzes the phosphorylation of the position 2 hydroxy group of 4-diphosphocytidyl-2C-methyl-D-erythritol. The protein is 4-diphosphocytidyl-2-C-methyl-D-erythritol kinase of Escherichia coli (strain 55989 / EAEC).